A 740-amino-acid chain; its full sequence is MPLAQLADPWQKMAVESPSDSAENGQQIMDEPMGEEEINPQTEEVSIKEIAITHHVKEGHEKADPSQFELLKVLGQGSFGKVFLVKKISGSDARQLYAMKVLKKATLKVRDRVRTKMERDILVEVNHPFIVKLHYAFQTEGKLYLILDFLRGGDLFTRLSKEVMFTEEDVKFYLAELALALDHLHSLGIIYRDLKPENILLDEEGHIKLTDFGLSKESIDHEKKAYSFCGTVEYMAPEVVNRRGHTQSADWWSFGVLMFEMLTGTLPFQGKDRKETMTMILKAKLGMPQFLSPEAQSLLRMLFKRNPANRLGAGPDGVEEIKRHSFFSTIDWNKLYRREIHPPFKPATGRPEDTFYFDPEFTAKTPKDSPGIPPSANAHQLFRGFSFVAITSDDESQAMQTVGVHSIVQQLHRNSIQFTDGYEVKEDIGVGSYSVCKRCIHKATNMEFAVKIIDKSKRDPTEEIEILLRYGQHPNIITLKDVYDDGKYVYVVTELMKGGELLDKILRQKFFSEREASAVLFTITKTVEYLHAQGVVHRDLKPSNILYVDESGNPESIRICDFGFAKQLRAENGLLMTPCYTANFVAPEVLKRQGYDAACDIWSLGVLLYTMLTGYTPFANGPDDTPEEILARIGSGKFSLSGGYWNSVSDTAKDLVSKMLHVDPHQRLTAALVLRHPWIVHWDQLPQYQLNRQDAPHLVKGAMAATYSALNRNQSPVLEPVGRSTLAQRRGIKKITSTAL.

The disordered stretch occupies residues 1 to 38 (MPLAQLADPWQKMAVESPSDSAENGQQIMDEPMGEEEI). Over residues 18-27 (PSDSAENGQQ) the composition is skewed to polar residues. Residues 68–327 (FELLKVLGQG…VEEIKRHSFF (260 aa)) enclose the Protein kinase 1 domain. Residues 74–82 (LGQGSFGKV) and Lys-100 each bind ATP. The Proton acceptor role is filled by Asp-193. Ser-227 is subject to Phosphoserine; by PDPK1. The 70-residue stretch at 328 to 397 (STIDWNKLYR…VAITSDDESQ (70 aa)) folds into the AGC-kinase C-terminal domain. At Thr-365 the chain carries Phosphothreonine. 2 positions are modified to phosphoserine: Ser-369 and Ser-375. The residue at position 386 (Ser-386) is a Phosphoserine; by autocatalysis and MAPKAPK2. A Phosphoserine modification is found at Ser-415. The region spanning 422–679 (YEVKEDIGVG…AALVLRHPWI (258 aa)) is the Protein kinase 2 domain. Residues 428–436 (IGVGSYSVC) and Lys-451 contribute to the ATP site. At Tyr-529 the chain carries Phosphotyrosine; by FGFR3. Asp-539 functions as the Proton acceptor in the catalytic mechanism. 2 positions are modified to phosphoserine: Ser-556 and Ser-715.

It belongs to the protein kinase superfamily. AGC Ser/Thr protein kinase family. S6 kinase subfamily. As to quaternary structure, forms a complex with either MAPK1/ERK2 or MAPK3/ERK1 in quiescent cells. Transiently dissociates following mitogenic stimulation. Interacts with NFATC4, ETV1/ER81 and FGFR1. It depends on Mg(2+) as a cofactor. Post-translationally, activated by phosphorylation at Ser-227 by PDPK1. Autophosphorylated on Ser-386, as part of the activation process. May be phosphorylated at Thr-365 and Ser-369 by MAPK1/ERK2 and MAPK3/ERK1. Can also be activated via phosphorylation at Ser-386 by MAPKAPK2. In terms of processing, N-terminal myristoylation results in an activated kinase in the absence of added growth factors. In terms of tissue distribution, expressed in many tissues, highest levels in skeletal muscle.

It localises to the nucleus. It is found in the cytoplasm. The enzyme catalyses L-seryl-[protein] + ATP = O-phospho-L-seryl-[protein] + ADP + H(+). It catalyses the reaction L-threonyl-[protein] + ATP = O-phospho-L-threonyl-[protein] + ADP + H(+). Its activity is regulated as follows. Upon extracellular signal or mitogen stimulation, phosphorylated at Thr-577 in the C-terminal kinase domain (CTKD) by MAPK1/ERK2 and MAPK3/ERK1. The activated CTKD then autophosphorylates Ser-386, allowing binding of PDPK1, which in turn phosphorylates Ser-227 in the N-terminal kinase domain (NTDK) leading to the full activation of the protein and subsequent phosphorylation of the substrates by the NTKD. Functionally, serine/threonine-protein kinase that acts downstream of ERK (MAPK1/ERK2 and MAPK3/ERK1) signaling and mediates mitogenic and stress-induced activation of the transcription factors CREB1, ETV1/ER81 and NR4A1/NUR77, regulates translation through RPS6 and EIF4B phosphorylation, and mediates cellular proliferation, survival, and differentiation by modulating mTOR signaling and repressing pro-apoptotic function of BAD and DAPK1. In fibroblast, is required for EGF-stimulated phosphorylation of CREB1 and histone H3 at 'Ser-10', which results in the subsequent transcriptional activation of several immediate-early genes. In response to mitogenic stimulation (EGF and PMA), phosphorylates and activates NR4A1/NUR77 and ETV1/ER81 transcription factors and the cofactor CREBBP. Upon insulin-derived signal, acts indirectly on the transcription regulation of several genes by phosphorylating GSK3B at 'Ser-9' and inhibiting its activity. Phosphorylates RPS6 in response to serum or EGF via an mTOR-independent mechanism and promotes translation initiation by facilitating assembly of the preinitiation complex. In response to insulin, phosphorylates EIF4B, enhancing EIF4B affinity for the EIF3 complex and stimulating cap-dependent translation. Is involved in the mTOR nutrient-sensing pathway by directly phosphorylating TSC2 at 'Ser-1798', which potently inhibits TSC2 ability to suppress mTOR signaling, and mediates phosphorylation of RPTOR, which regulates mTORC1 activity and may promote rapamycin-sensitive signaling independently of the PI3K/AKT pathway. Mediates cell survival by phosphorylating the pro-apoptotic proteins BAD and DAPK1 and suppressing their pro-apoptotic function. Promotes the survival of hepatic stellate cells by phosphorylating CEBPB in response to the hepatotoxin carbon tetrachloride (CCl4). Is involved in cell cycle regulation by phosphorylating the CDK inhibitor CDKN1B, which promotes CDKN1B association with 14-3-3 proteins and prevents its translocation to the nucleus and inhibition of G1 progression. In LPS-stimulated dendritic cells, is involved in TLR4-induced macropinocytosis, and in myeloma cells, acts as effector of FGFR3-mediated transformation signaling, after direct phosphorylation at Tyr-529 by FGFR3. Negatively regulates EGF-induced MAPK1/3 phosphorylation via phosphorylation of SOS1. Phosphorylates SOS1 at 'Ser-1134' and 'Ser-1161' that create YWHAB and YWHAE binding sites and which contribute to the negative regulation of MAPK1/3 phosphorylation. Phosphorylates EPHA2 at 'Ser-897', the RPS6KA-EPHA2 signaling pathway controls cell migration. Acts as a regulator of osteoblast differentiation by mediating phosphorylation of ATF4, thereby promoting ATF4 transactivation activity. This Homo sapiens (Human) protein is Ribosomal protein S6 kinase alpha-3 (RPS6KA3).